The following is a 253-amino-acid chain: Sulfate transporter CysZ (253 aa).

4 helical membrane passes run 31-51 (FVIL…WWLF), 75-95 (LLWP…FSTI), 151-171 (IVLL…PVLW), and 222-242 (IPLL…AMWV).

This sequence belongs to the CysZ family.

Its subcellular location is the cell inner membrane. Its function is as follows. High affinity, high specificity proton-dependent sulfate transporter, which mediates sulfate uptake. Provides the sulfur source for the cysteine synthesis pathway. This chain is Sulfate transporter CysZ, found in Escherichia coli O127:H6 (strain E2348/69 / EPEC).